Consider the following 372-residue polypeptide: MADS-box transcription factor pvg4 (372 aa).

Residues 1 to 61 (MGRKKISIAP…GRLHVFCSSD (61 aa)) form the MADS-box domain. The segment at 81–187 (SHFSSSPVEE…HPPHPHFHNN (107 aa)) is disordered. Low complexity predominate over residues 84–100 (SSSPVEESSTVSPETTT). A compositionally biased stretch (polar residues) spans 114-145 (QDQPLSDSQLDTGDSPATSETTVQDYNPQVQS). Residues 167-184 (QHHHPHTRPPHHPPHPHF) are compositionally biased toward basic residues.

It is found in the nucleus. Functionally, acts in transcription regulation. May bind to a MEF2-like typee II promoter sequence. The protein is MADS-box transcription factor pvg4 (pvg4) of Schizosaccharomyces pombe (strain 972 / ATCC 24843) (Fission yeast).